Consider the following 215-residue polypeptide: UPF0502 protein YceH (215 aa).

Residue Lys-80 is modified to N6-acetyllysine.

It belongs to the UPF0502 family.

This Escherichia coli O7:K1 (strain IAI39 / ExPEC) protein is UPF0502 protein YceH.